The following is a 388-amino-acid chain: Pepsin A-5 (388 aa).

An N-terminal signal peptide occupies residues 1 to 15 (MKWLLLLGLVALSEC). Positions 16–62 (IMYKVPLIRKKSLRRTLSERGLLKDFLKKHNLNPARKYFPQWEAPTL) are cleaved as a propeptide — activation peptide. Positions 76-385 (YFGTIGIGTP…DRANNQVGLA (310 aa)) constitute a Peptidase A1 domain. The active site involves Asp-94. Residues Cys-107 and Cys-112 are joined by a disulfide bond. Ser-130 is modified (phosphoserine). Cys-268 and Cys-272 are oxidised to a cystine. The active site involves Asp-277. A disulfide bridge links Cys-311 with Cys-344.

The protein belongs to the peptidase A1 family.

It localises to the secreted. The enzyme catalyses Preferential cleavage: hydrophobic, preferably aromatic, residues in P1 and P1' positions. Cleaves 1-Phe-|-Val-2, 4-Gln-|-His-5, 13-Glu-|-Ala-14, 14-Ala-|-Leu-15, 15-Leu-|-Tyr-16, 16-Tyr-|-Leu-17, 23-Gly-|-Phe-24, 24-Phe-|-Phe-25 and 25-Phe-|-Tyr-26 bonds in the B chain of insulin.. Shows particularly broad specificity; although bonds involving phenylalanine and leucine are preferred, many others are also cleaved to some extent. The sequence is that of Pepsin A-5 (PGA5) from Homo sapiens (Human).